Consider the following 610-residue polypeptide: UvrABC system protein C (610 aa).

The region spanning 16-94 (SQPGVYRMYD…IKLYQPRYNV (79 aa)) is the GIY-YIG domain. Residues 204–239 (QQVLTQLITRMEEASQQLHFEDAARIRDQIQAVRRV) enclose the UVR domain.

This sequence belongs to the UvrC family. As to quaternary structure, interacts with UvrB in an incision complex.

Its subcellular location is the cytoplasm. Functionally, the UvrABC repair system catalyzes the recognition and processing of DNA lesions. UvrC both incises the 5' and 3' sides of the lesion. The N-terminal half is responsible for the 3' incision and the C-terminal half is responsible for the 5' incision. This is UvrABC system protein C from Yersinia pseudotuberculosis serotype I (strain IP32953).